We begin with the raw amino-acid sequence, 127 residues long: Mitochondrial pyruvate carrier 2 (127 aa).

Over 2–40 (AAAGARGLRATYHRLMDKVELLLPKKLRPLYNHPAGPRT) the chain is Mitochondrial matrix. Lysine 26 is modified (N6-acetyllysine). Residues 41-61 (VFFWAPIMKWGLVCAGLADMA) traverse the membrane as a helical segment. At 62–72 (RPAEKLSTAQS) the chain is on the mitochondrial intermembrane side. The chain crosses the membrane as a helical span at residues 73-90 (TVLMATGFIWSRYSLVII). At 91-95 (PKNWS) the chain is on the mitochondrial matrix side. Residues 96–115 (LFAVNFFVGSAGASQLFRIW) form a helical membrane-spanning segment. Residues 116–127 (KYNQELKSKGIQ) lie on the Mitochondrial intermembrane side of the membrane.

It belongs to the mitochondrial pyruvate carrier (MPC) (TC 2.A.105) family. Homodimer. Homooligomer. Forms heterodimers with MPC1 and MPC1L. The heterodimer is the more stable and dominant form. As to expression, liver, kidney, and brain.

The protein resides in the mitochondrion inner membrane. It carries out the reaction pyruvate(out) + H(+)(out) = pyruvate(in) + H(+)(in). Mediates the uptake of pyruvate into mitochondria. The chain is Mitochondrial pyruvate carrier 2 (Mpc2) from Rattus norvegicus (Rat).